Consider the following 918-residue polypeptide: Importin subunit beta-2 (918 aa).

18 HEAT repeats span residues 11–38, 43–92, 103–137, 145–181, 190–222, 235–263, 275–303, 320–413, 421–449, 461–488, 501–534, 542–577, 583–620, 628–678, 694–725, 777–814, 825–858, and 867–900; these read YVLQ…EAME, QPEF…GGNN, YVKS…TYYR, GLQM…FQLE, EALL…TVIP, FLEI…SFLL, DGIV…FLHA, KDIV…MTNI, IAFP…GAMA, PALI…TLSR, LIPV…IENA, LFYS…AEKC, AMQI…SSLG, PEVY…GLGA, ILKI…YFFN, IDMS…LTHP, DSNW…INLT, and DTIH…SAQI. The disordered stretch occupies residues 361-395; the sequence is APRIVKKKEAGNGEDADDNEDDDDDDDDEDGDVDT. Acidic residues predominate over residues 372–393; the sequence is NGEDADDNEDDDDDDDDEDGDV.

It belongs to the importin beta family. Importin beta-2 subfamily. As to quaternary structure, interacts with Ran (GSP1); interacts specifically with the GTP-bound form of Ran (GTP-Ran), protecting it from GTP hydrolysis and nucleotide exchange. Interacts with nucleoporins NUP1, NUP100 and NUP116. Interacts with NAB2 and HRP1/NAB4; via their rg-NLS. Interacts with TFG2; via its PY-NLS.

It is found in the cytoplasm. It localises to the nucleus. The protein resides in the nuclear pore complex. Its function is as follows. Functions in nuclear protein import as nuclear transport receptor. Serves as receptor for arginine/glycine-rich nuclear localization signals (rg-NLS) and PY-NLS in cargo substrates. Its predominant cargo substrate seems to be mRNA-binding proteins. Required for nuclear transport of NAB2, HRP1/NAB4 and TFG2. Mediates docking of the importin/substrate complex to the nuclear pore complex (NPC) through binding to repeat-containing nucleoporins. The complex is subsequently translocated through the pore by an energy requiring, Ran-dependent mechanism. At the nucleoplasmic side of the NPC, GTP-Ran binding leads to release of the cargo. Efficient GTP-Ran-mediated substrate release requires RNA. The importin is re-exported from the nucleus to the cytoplasm where GTP hydrolysis releases Ran from importin. The directionality of nuclear import is thought to be conferred by an asymmetric distribution of the GTP- and GDP-bound forms of Ran between the cytoplasm and nucleus. The protein is Importin subunit beta-2 of Saccharomyces cerevisiae (strain ATCC 204508 / S288c) (Baker's yeast).